The chain runs to 456 residues: Cysteine--tRNA ligase (456 aa).

Cys-29 is a Zn(2+) binding site. A 'HIGH' region motif is present at residues 31–41; the sequence is VTVYDYCHVGH. Residues Cys-210, His-235, and Glu-239 each coordinate Zn(2+). The 'KMSKS' region motif lies at 267–271; sequence KMSKS. ATP is bound at residue Lys-270.

This sequence belongs to the class-I aminoacyl-tRNA synthetase family. In terms of assembly, monomer. It depends on Zn(2+) as a cofactor.

It localises to the cytoplasm. It catalyses the reaction tRNA(Cys) + L-cysteine + ATP = L-cysteinyl-tRNA(Cys) + AMP + diphosphate. This is Cysteine--tRNA ligase from Hydrogenovibrio crunogenus (strain DSM 25203 / XCL-2) (Thiomicrospira crunogena).